Here is a 255-residue protein sequence, read N- to C-terminus: Acetyl-coenzyme A carboxylase carboxyl transferase subunit alpha (255 aa).

A CoA carboxyltransferase C-terminal domain is found at 1 to 235 (MNIAKIVREA…KKELQTELAR (235 aa)).

Belongs to the AccA family. Acetyl-CoA carboxylase is a heterohexamer composed of biotin carboxyl carrier protein (AccB), biotin carboxylase (AccC) and two subunits each of ACCase subunit alpha (AccA) and ACCase subunit beta (AccD).

It is found in the cytoplasm. It carries out the reaction N(6)-carboxybiotinyl-L-lysyl-[protein] + acetyl-CoA = N(6)-biotinyl-L-lysyl-[protein] + malonyl-CoA. It participates in lipid metabolism; malonyl-CoA biosynthesis; malonyl-CoA from acetyl-CoA: step 1/1. In terms of biological role, component of the acetyl coenzyme A carboxylase (ACC) complex. First, biotin carboxylase catalyzes the carboxylation of biotin on its carrier protein (BCCP) and then the CO(2) group is transferred by the carboxyltransferase to acetyl-CoA to form malonyl-CoA. In Streptococcus pneumoniae (strain CGSP14), this protein is Acetyl-coenzyme A carboxylase carboxyl transferase subunit alpha.